A 446-amino-acid polypeptide reads, in one-letter code: tRNA(Ile2) 2-agmatinylcytidine synthetase TiaS (446 aa).

It belongs to the TiaS family.

It localises to the cytoplasm. It carries out the reaction cytidine(34) in tRNA(Ile2) + agmatine + ATP + H2O = 2-agmatinylcytidine(34) in tRNA(Ile2) + AMP + 2 phosphate + 2 H(+). Functionally, ATP-dependent agmatine transferase that catalyzes the formation of 2-agmatinylcytidine (agm2C) at the wobble position (C34) of tRNA(Ile2), converting the codon specificity from AUG to AUA. The chain is tRNA(Ile2) 2-agmatinylcytidine synthetase TiaS from Cenarchaeum symbiosum (strain A).